The primary structure comprises 405 residues: Indoleamine 2,3-dioxygenase 2 (405 aa).

Residue His347 participates in heme binding.

This sequence belongs to the indoleamine 2,3-dioxygenase family. Requires heme as cofactor. As to expression, expressed mainly in antigen-presenting immune cells, liver, kidney, brain, and placenta. Highly expressed in kidney, followed by epididymis and liver (at protein level). Detected in the tails of the spermatozoa in the testis and in the kidney tubules (at protein level). Constitutively expressed in brain.

It catalyses the reaction L-tryptophan + O2 = N-formyl-L-kynurenine. It functions in the pathway amino-acid degradation; L-tryptophan degradation via kynurenine pathway; L-kynurenine from L-tryptophan: step 1/2. With respect to regulation, activity is inhibited by D-1MT (1-methyl-D-tryptophan) and MTH-trp (methylthiohydantoin-DL-tryptophan) but not L-1MT (1-methyl-L-tryptophan). Catalyzes the first and rate-limiting step in the kynurenine pathway of tryptophan catabolism. Involved in immune regulation. This Mus musculus (Mouse) protein is Indoleamine 2,3-dioxygenase 2.